Here is a 184-residue protein sequence, read N- to C-terminus: Peptide deformylase (184 aa).

Residues Cys-98 and His-140 each coordinate Fe cation. The active site involves Glu-141. His-144 serves as a coordination point for Fe cation.

The protein belongs to the polypeptide deformylase family. Requires Fe(2+) as cofactor.

The enzyme catalyses N-terminal N-formyl-L-methionyl-[peptide] + H2O = N-terminal L-methionyl-[peptide] + formate. Functionally, removes the formyl group from the N-terminal Met of newly synthesized proteins. Requires at least a dipeptide for an efficient rate of reaction. N-terminal L-methionine is a prerequisite for activity but the enzyme has broad specificity at other positions. The sequence is that of Peptide deformylase from Phocaeicola vulgatus (strain ATCC 8482 / DSM 1447 / JCM 5826 / CCUG 4940 / NBRC 14291 / NCTC 11154) (Bacteroides vulgatus).